The following is a 159-amino-acid chain: Calcium-binding protein CML39 (159 aa).

EF-hand domains follow at residues 18 to 53 (EKNR…LGEQ), 54 to 89 (MSDE…NDEF), 93 to 128 (EKKR…LGES), and 129 to 159 (RTTD…LMMR). Residues Asp-31, Asn-33, Asp-35, Arg-37, Glu-42, Asp-67, Asp-69, Asp-71, Met-73, and Glu-78 each coordinate Ca(2+). Ca(2+) contacts are provided by Asp-142, Asn-144, Asp-146, and Glu-153.

As to expression, expressed in the zones of elongation and differentiation in seedling roots and at the root-hypocotyl junction. Expressed from stage 12 of flower development in anthers, specifically in pollen.

Potential calcium sensor that binds calcium in vitro. This Arabidopsis thaliana (Mouse-ear cress) protein is Calcium-binding protein CML39 (CML39).